Reading from the N-terminus, the 178-residue chain is Caveolin-1 (178 aa).

The residue at position 2 (Ser-2) is an N-acetylserine. Ser-2 carries the phosphoserine modification. Residues 2-94 are required for homooligomerization; the sequence is SGGKYVDAEG…WKASFTTFTV (93 aa). The Cytoplasmic segment spans residues 2 to 104; the sequence is SGGKYVDAEG…TKYWFYRLLS (103 aa). Lys-5 carries the N6-acetyllysine; alternate modification. Lys-5 participates in a covalent cross-link: Glycyl lysine isopeptide (Lys-Gly) (interchain with G-Cter in ubiquitin); alternate. Tyr-6 is modified (phosphotyrosine). Tyr-14 carries the post-translational modification Phosphotyrosine; by ABL1. Tyr-25 bears the Phosphotyrosine mark. Glycyl lysine isopeptide (Lys-Gly) (interchain with G-Cter in ubiquitin) cross-links involve residues Lys-26, Lys-30, Lys-39, Lys-47, and Lys-57. The tract at residues 82 to 94 is interaction with CAVIN3; the sequence is DGIWKASFTTFTV. The segment at residues 105–125 is an intramembrane region (helical); sequence ALLGIPLALLWGIYFAILSFL. Residues 126-178 are Cytoplasmic-facing; sequence HIWAVVPCIRSYLIEIQCISRVYSICIHTFCDPLFEAIGKVFSNIRATVQKEI. An interacts with SPRY1, SPRY2, SPRY3 and SPRY4 region spans residues 131–142; that stretch reads VPCIRSYLIEIQ. Residues Cys-133, Cys-143, and Cys-156 are each lipidated (S-palmitoyl cysteine). Residues 149–160 form an interacts with SPRY1, SPRY2, and SPRY4 region; that stretch reads SICIHTFCDPLF. Residues 167 to 178 form an interacts with SPRY1, SPRY2, SPRY3 and SPRY4 region; that stretch reads FSNIRATVQKEI.

This sequence belongs to the caveolin family. As to quaternary structure, homooligomer. Interacts with GLIPR2. Interacts with NOSTRIN. Interacts with SNAP25 and STX1A. Interacts (via the N-terminus) with DPP4; the interaction is direct. Interacts with CTNNB1, CDH1 and JUP. Interacts with PACSIN2; this interaction induces membrane tubulation. Interacts with SLC7A9. Interacts with BMX and BTK. Interacts with TGFBR1. Interacts with CAVIN3 (via leucine-zipper domain) in a cholesterol-sensitive manner. Interacts with CAVIN1. Interacts with EHD2 in a cholesterol-dependent manner. Forms a ternary complex with UBXN6 and VCP; mediates CAV1 targeting to lysosomes for degradation. Interacts with ABCG1; this interaction regulates ABCG1-mediated cholesterol efflux. Interacts with NEU3; this interaction enhances NEU3 sialidase activity within caveola. Interacts (via C-terminus) with SPRY1, SPRY2 (via C-terminus), SPRY3, and SPRY4. Interacts with IGFBP5; this interaction allows trafficking of IGFBP5 from the plasma membrane to the nucleus. Post-translationally, phosphorylated at Tyr-14 by ABL1 in response to oxidative stress. In terms of processing, ubiquitinated. Undergo monoubiquitination and multi- and/or polyubiquitination. Monoubiquitination of N-terminal lysines promotes integration in a ternary complex with UBXN6 and VCP which promotes oligomeric CAV1 targeting to lysosomes for degradation. Ubiquitinated by ZNRF1; leading to degradation and modulation of the TLR4-mediated immune response.

It is found in the golgi apparatus membrane. The protein localises to the cell membrane. Its subcellular location is the membrane. The protein resides in the caveola. It localises to the membrane raft. In terms of biological role, may act as a scaffolding protein within caveolar membranes. Forms a stable heterooligomeric complex with CAV2 that targets to lipid rafts and drives caveolae formation. Mediates the recruitment of CAVIN proteins (CAVIN1/2/3/4) to the caveolae. Interacts directly with G-protein alpha subunits and can functionally regulate their activity. Involved in the costimulatory signal essential for T-cell receptor (TCR)-mediated T-cell activation. Its binding to DPP4 induces T-cell proliferation and NF-kappa-B activation in a T-cell receptor/CD3-dependent manner. Recruits CTNNB1 to caveolar membranes and may regulate CTNNB1-mediated signaling through the Wnt pathway. Negatively regulates TGFB1-mediated activation of SMAD2/3 by mediating the internalization of TGFBR1 from membrane rafts leading to its subsequent degradation. Binds 20(S)-hydroxycholesterol (20(S)-OHC). This chain is Caveolin-1 (CAV1), found in Ornithorhynchus anatinus (Duckbill platypus).